The chain runs to 1090 residues: Protein CHROMATIN REMODELING 24 (1090 aa).

2 disordered regions span residues 1–51 (MAEN…MIKL) and 247–273 (VGKQNSYSGRHFDDNSEDNRQGYNLDR). The short motif at 44–51 (TKKSMIKL) is the Nuclear localization signal element. The span at 256 to 273 (RHFDDNSEDNRQGYNLDR) shows a compositional bias: basic and acidic residues. The Helicase ATP-binding domain maps to 389 to 564 (WSLHTQGKGG…WALFNFSCPG (176 aa)). 402 to 409 (DDMGLGKT) serves as a coordination point for ATP. The DEAH box signature appears at 515–518 (DEGH). Residues 736–895 (FIMSLLENLI…IRYFSQQDLR (160 aa)) enclose the Helicase C-terminal domain. A coiled-coil region spans residues 1043–1069 (DGGAKIQKQIAELTRELKDMKAAERIN).

The protein belongs to the SNF2/RAD54 helicase family.

Its subcellular location is the nucleus. Functionally, DNA helicase that acts as an essential component of the spindle assembly checkpoint. Probable chromatin remodeling factor that regulate homologous recombination (HR) and non-homologous recombination (NHR). The protein is Protein CHROMATIN REMODELING 24 of Arabidopsis thaliana (Mouse-ear cress).